We begin with the raw amino-acid sequence, 411 residues long: Adherens junction-associated protein 1 (411 aa).

An N-terminal signal peptide occupies residues 1 to 43; it reads MWIQQLLGLSSMPIRWPGRSLGSHLWILIAMLQLAVDFPSCDS. At 44–283 the chain is on the extracellular side; that stretch reads LGPGPEFRLL…GETSGLAVHQ (240 aa). 3 stretches are compositionally biased toward low complexity: residues 62-76, 121-145, and 247-264; these read LWSL…LPTP, PPAA…AGAA, and TPVG…SNNG. Disordered stretches follow at residues 62 to 156 and 242 to 270; these read LWSL…RGRR and DPWK…IQPP. A helical transmembrane segment spans residues 284–304; that stretch reads IITITVSLIMVIAALITTLVL. Residues 304 to 411 form a targeting signals region; the sequence is LKNCCAPSGH…VSEKWFEISC (108 aa). At 305–411 the chain is on the cytoplasmic side; sequence KNCCAPSGHT…VSEKWFEISC (107 aa).

In terms of assembly, forms a complex with CDH1 and CTNNB1; interacts directly with CTNNB1. Interacts with AP1M2 and with isoform 2 of BSG/CD147.

Its subcellular location is the basolateral cell membrane. The protein localises to the apical cell membrane. It localises to the cell junction. The protein resides in the adherens junction. In terms of biological role, plays a role in cell adhesion and cell migration. The chain is Adherens junction-associated protein 1 (Ajap1) from Rattus norvegicus (Rat).